We begin with the raw amino-acid sequence, 428 residues long: Glutamate-1-semialdehyde 2,1-aminomutase (428 aa).

Lysine 265 bears the N6-(pyridoxal phosphate)lysine mark.

Belongs to the class-III pyridoxal-phosphate-dependent aminotransferase family. HemL subfamily. As to quaternary structure, homodimer. The cofactor is pyridoxal 5'-phosphate.

It is found in the cytoplasm. It catalyses the reaction (S)-4-amino-5-oxopentanoate = 5-aminolevulinate. It functions in the pathway porphyrin-containing compound metabolism; protoporphyrin-IX biosynthesis; 5-aminolevulinate from L-glutamyl-tRNA(Glu): step 2/2. This Shewanella loihica (strain ATCC BAA-1088 / PV-4) protein is Glutamate-1-semialdehyde 2,1-aminomutase.